The following is a 254-amino-acid chain: Bacteriorhodopsin-I (254 aa).

The propeptide occupies 1–6; the sequence is MSQLAL. The residue at position 7 (Gln7) is a Pyrrolidone carboxylic acid. Transmembrane regions (helical) follow at residues 16 to 36, 51 to 71, 91 to 111, 116 to 136, 144 to 164, 185 to 205, and 212 to 232; these read EGIW…YFIA, VITI…FFGF, YADW…LAGA, IGAL…ATLT, AFWT…VAVF, IILV…EGLA, and ETLL…FILL. The residue at position 224 (Lys224) is an N6-(retinylidene)lysine.

Belongs to the archaeal/bacterial/fungal opsin family. In terms of processing, the covalent binding of retinal to the apoprotein, bacterioopsin, generates bacteriorhodopsin.

It is found in the cell membrane. Its function is as follows. Light-driven proton pump. This is Bacteriorhodopsin-I (bop1) from Haloquadratum walsbyi (strain DSM 16854 / JCM 12705 / C23).